The sequence spans 707 residues: Alpha-hemolysin translocation ATP-binding protein HlyB (707 aa).

In terms of domain architecture, Peptidase C39 spans 2–125 (DFHHKNNYGL…DLYQGNIILI (124 aa)). Histidine 83 is a catalytic residue. In terms of domain architecture, ABC transmembrane type-1 spans 154-436 (FIETLIVSVF…LAQLWQDFQQ (283 aa)). 5 helical membrane passes run 158–178 (LIVS…FQVV), 191–211 (LNII…LSGL), 269–289 (ALTS…MWYY), 295–315 (LVIL…SPIL), and 387–407 (AVMI…DLSI). The ABC transporter domain occupies 468–703 (ISFRNIRFRY…PESLYHYLHQ (236 aa)). 502-509 (GRSGSGKS) is a binding site for ATP.

It belongs to the ABC transporter superfamily. Protein-1 exporter (TC 3.A.1.109) family.

Its subcellular location is the cell membrane. In terms of biological role, involved in the export of hemolysin A. The sequence is that of Alpha-hemolysin translocation ATP-binding protein HlyB (hlyB) from Proteus vulgaris.